A 320-amino-acid polypeptide reads, in one-letter code: Aminoacyl tRNA synthase complex-interacting multifunctional protein 2 (320 aa).

The tract at residues 31-52 is disordered; sequence HSKTTSPATDAGHVQETSEPSL. A Phosphoserine modification is found at Ser36. An interaction with PRKN region spans residues 82–162; the sequence is TPDADLDVTN…HTHSSVKNVP (81 aa). The segment at 162-225 is interaction with TP53; it reads PENLLKCFGE…FLFSLFGQKH (64 aa). The GST C-terminal domain maps to 220–317; sequence LFGQKHSAVN…NLVPFSTALQ (98 aa).

Part of the multisynthetase complex (MSC), a multisubunit complex that groups tRNA ligases for Arg (RARS1), Asp (DARS1), Gln (QARS1), Ile (IARS1), Leu (LARS1), Lys (KARS1), Met (MARS1) the bifunctional ligase for Glu and Pro (EPRS1) and the auxiliary subunits AIMP1/p43, AIMP2/p38 and EEF1E1/p18. Interacts (via N-terminus) with KARS1. Interacts with EPRS1. Forms a linear complex that contains MARS1, EEF1E1, EPRS1 and AIMP2 that is at the core of the multisubunit complex. Binds FUBP1 (via C-terminus). Interacts in both its unphosphorylated and phosphorylated forms with p53/TP53 (via N-terminus) in the nucleus following UV irradiation. Interacts (via N-terminus) with PRKN/parkin (via first RING-type domain). Interacts with TARS3. In terms of processing, phosphorylated on serine residues in response to UV irradiation. Post-translationally, ubiquitinated by PRKN, leading to its degradation by the proteasome.

It localises to the cytoplasm. The protein localises to the cytosol. It is found in the nucleus. Its function is as follows. Required for assembly and stability of the aminoacyl-tRNA synthase complex. Mediates ubiquitination and degradation of FUBP1, a transcriptional activator of MYC, leading to MYC down-regulation which is required for aveolar type II cell differentiation. Blocks MDM2-mediated ubiquitination and degradation of p53/TP53. Functions as a proapoptotic factor. In Cricetulus griseus (Chinese hamster), this protein is Aminoacyl tRNA synthase complex-interacting multifunctional protein 2 (AIMP2).